A 363-amino-acid polypeptide reads, in one-letter code: 3-isopropylmalate dehydrogenase (363 aa).

Residue 78 to 91 (GPKWEHLPPDQQPE) coordinates NAD(+). Residues Arg-99, Arg-109, Arg-138, and Asp-227 each contribute to the substrate site. Asp-227, Asp-251, and Asp-255 together coordinate Mg(2+). 285-297 (GSAPDIAGKNIAN) is an NAD(+) binding site.

This sequence belongs to the isocitrate and isopropylmalate dehydrogenases family. LeuB type 1 subfamily. Homodimer. Mg(2+) is required as a cofactor. The cofactor is Mn(2+).

Its subcellular location is the cytoplasm. The catalysed reaction is (2R,3S)-3-isopropylmalate + NAD(+) = 4-methyl-2-oxopentanoate + CO2 + NADH. It participates in amino-acid biosynthesis; L-leucine biosynthesis; L-leucine from 3-methyl-2-oxobutanoate: step 3/4. Its function is as follows. Catalyzes the oxidation of 3-carboxy-2-hydroxy-4-methylpentanoate (3-isopropylmalate) to 3-carboxy-4-methyl-2-oxopentanoate. The product decarboxylates to 4-methyl-2 oxopentanoate. The sequence is that of 3-isopropylmalate dehydrogenase from Shigella sonnei (strain Ss046).